Here is a 380-residue protein sequence, read N- to C-terminus: Cytochrome b (380 aa).

4 consecutive transmembrane segments (helical) span residues 34-54 (FGSL…LLAM), 78-99 (WLIR…YLHI), 114-134 (WNTG…GYVL), and 179-199 (FFAL…VHLT). Heme b contacts are provided by His84 and His98. Heme b contacts are provided by His183 and His197. A ubiquinone is bound at residue His202. 4 helical membrane-spanning segments follow: residues 227 to 247 (LKDI…ALFS), 289 to 309 (LGGV…PFLH), 321 to 341 (LSQL…WVGS), and 348 to 368 (FIII…ILFP).

This sequence belongs to the cytochrome b family. In terms of assembly, the cytochrome bc1 complex contains 11 subunits: 3 respiratory subunits (MT-CYB, CYC1 and UQCRFS1), 2 core proteins (UQCRC1 and UQCRC2) and 6 low-molecular weight proteins (UQCRH/QCR6, UQCRB/QCR7, UQCRQ/QCR8, UQCR10/QCR9, UQCR11/QCR10 and a cleavage product of UQCRFS1). This cytochrome bc1 complex then forms a dimer. Heme b is required as a cofactor.

The protein resides in the mitochondrion inner membrane. In terms of biological role, component of the ubiquinol-cytochrome c reductase complex (complex III or cytochrome b-c1 complex) that is part of the mitochondrial respiratory chain. The b-c1 complex mediates electron transfer from ubiquinol to cytochrome c. Contributes to the generation of a proton gradient across the mitochondrial membrane that is then used for ATP synthesis. The chain is Cytochrome b (MT-CYB) from Procellaria westlandica (Westland petrel).